The primary structure comprises 365 residues: Peptide chain release factor 1 (365 aa).

At Gln236 the chain carries N5-methylglutamine.

The protein belongs to the prokaryotic/mitochondrial release factor family. Post-translationally, methylated by PrmC. Methylation increases the termination efficiency of RF1.

It localises to the cytoplasm. Peptide chain release factor 1 directs the termination of translation in response to the peptide chain termination codons UAG and UAA. The polypeptide is Peptide chain release factor 1 (Latilactobacillus sakei subsp. sakei (strain 23K) (Lactobacillus sakei subsp. sakei)).